A 286-amino-acid chain; its full sequence is Bifunctional protein FolD (286 aa).

NADP(+) contacts are provided by residues 165-167 (GRS), S190, and V231.

The protein belongs to the tetrahydrofolate dehydrogenase/cyclohydrolase family. As to quaternary structure, homodimer.

It carries out the reaction (6R)-5,10-methylene-5,6,7,8-tetrahydrofolate + NADP(+) = (6R)-5,10-methenyltetrahydrofolate + NADPH. The enzyme catalyses (6R)-5,10-methenyltetrahydrofolate + H2O = (6R)-10-formyltetrahydrofolate + H(+). It participates in one-carbon metabolism; tetrahydrofolate interconversion. Functionally, catalyzes the oxidation of 5,10-methylenetetrahydrofolate to 5,10-methenyltetrahydrofolate and then the hydrolysis of 5,10-methenyltetrahydrofolate to 10-formyltetrahydrofolate. This is Bifunctional protein FolD from Bacillus cereus (strain ATCC 14579 / DSM 31 / CCUG 7414 / JCM 2152 / NBRC 15305 / NCIMB 9373 / NCTC 2599 / NRRL B-3711).